The primary structure comprises 199 residues: Recombination protein RecR (199 aa).

Residues 58-73 (CVNCGNIGTGDLCEIC) form a C4-type zinc finger. Residues 81–176 (GEICVVEDVA…TLSSLAQGVP (96 aa)) form the Toprim domain.

This sequence belongs to the RecR family.

In terms of biological role, may play a role in DNA repair. It seems to be involved in an RecBC-independent recombinational process of DNA repair. It may act with RecF and RecO. This is Recombination protein RecR from Jannaschia sp. (strain CCS1).